Here is a 249-residue protein sequence, read N- to C-terminus: ATP synthase subunit a (249 aa).

Transmembrane regions (helical) follow at residues 29–49 (ASLFMVATVAAASGFLYFATS), 84–104 (FFPFVFSLFMFVLTANLLGMF), 114–134 (IIVTFALACLVIGTVIVYGFY), 140–160 (FFGIFAPSGVPKALLPLVASI), 193–213 (FVASMGALGALGVGGAVLPLI), and 216–236 (VAMTALEFLVAFLQAYVFAVL).

Belongs to the ATPase A chain family. F-type ATPases have 2 components, CF(1) - the catalytic core - and CF(0) - the membrane proton channel. CF(1) has five subunits: alpha(3), beta(3), gamma(1), delta(1), epsilon(1). CF(0) has three main subunits: a(1), b(2) and c(9-12). The alpha and beta chains form an alternating ring which encloses part of the gamma chain. CF(1) is attached to CF(0) by a central stalk formed by the gamma and epsilon chains, while a peripheral stalk is formed by the delta and b chains.

It localises to the cell inner membrane. Key component of the proton channel; it plays a direct role in the translocation of protons across the membrane. The sequence is that of ATP synthase subunit a from Agrobacterium fabrum (strain C58 / ATCC 33970) (Agrobacterium tumefaciens (strain C58)).